Reading from the N-terminus, the 440-residue chain is MQEKMEVQYMVVSFSHKNVDIATREKLSFSQEEIVPFLQEINVCDSIRESILLCTCNRVELYVSMIDKKRAREHIYECFCTHKNIALEDIKNIALMRLNQYAIYHIFSVASSLDSLVIGETQITGQLKLAYKLAFENALCAKDMTRLMHFAFKCAASVRKETDISAHSVSVASTAVRMAEQKLALCDKTLENLPVLVIGSGEMGRLACKHLQNANAQITLVSRTKENARKLALELDSSINIESWEHLEQLLGQYEVLFSATSAPNCIIQSKMVQVSQKQRWWFDLALPRDIENIQMENLHIFCVDDLEEIVQEHKNAREDSAKKAQKILERYSVEFFKWLQTLGIDPIIKHIRYLAKQSALKELDRAVKKGFLPASYQQNVEKILHGAFNTFLHQPTIRLKQASENPQGDPIIEAMKNVFDISDDVVMLNGYKCEKDTIF.

Substrate-binding positions include 55-58 (TCNR), S115, 120-122 (ETQ), and Q126. The Nucleophile role is filled by C56. 199-204 (GSGEMG) serves as a coordination point for NADP(+).

This sequence belongs to the glutamyl-tRNA reductase family. In terms of assembly, homodimer.

It catalyses the reaction (S)-4-amino-5-oxopentanoate + tRNA(Glu) + NADP(+) = L-glutamyl-tRNA(Glu) + NADPH + H(+). It participates in porphyrin-containing compound metabolism; protoporphyrin-IX biosynthesis; 5-aminolevulinate from L-glutamyl-tRNA(Glu): step 1/2. In terms of biological role, catalyzes the NADPH-dependent reduction of glutamyl-tRNA(Glu) to glutamate 1-semialdehyde (GSA). The protein is Glutamyl-tRNA reductase of Helicobacter hepaticus (strain ATCC 51449 / 3B1).